A 695-amino-acid chain; its full sequence is Amphiphysin (695 aa).

2 coiled-coil regions span residues 10 to 83 and 144 to 191; these read AKNV…SLHE and DYDS…QEEL. The BAR domain maps to 24 to 240; it reads VLQKLGKADE…MTKLGDQHAD (217 aa). 2 disordered regions span residues 244–312 and 486–617; these read TIQG…VTPT and GAPG…EASQ. Ser252 bears the Phosphoserine mark. Thr260 is modified (phosphothreonine). Residues 261-274 are compositionally biased toward pro residues; that stretch reads PSPPEEPSPLPSPT. Residues Ser262, Ser268, Ser272, and Ser276 each carry the phosphoserine modification. A Phosphothreonine modification is found at Thr280. 2 positions are modified to phosphoserine: Ser506 and Ser638. Residues 622–695 enclose the SH3 domain; that stretch reads GFLYKVETLH…FPENFTRRLD (74 aa).

As to quaternary structure, heterodimer with BIN1. Binds SH3GLB1. Interacts with REPS1 and SGIP1. Binds AP2A2. Interacts with AP2B1. Interacts with DNM1 and SYNJ1. In terms of tissue distribution, neurons, certain endocrine cell types and spermatocytes.

The protein resides in the cytoplasmic vesicle. It localises to the secretory vesicle. Its subcellular location is the synaptic vesicle membrane. It is found in the cytoplasm. The protein localises to the cytoskeleton. Functionally, may participate in mechanisms of regulated exocytosis in synapses and certain endocrine cell types. May control the properties of the membrane associated cytoskeleton. The polypeptide is Amphiphysin (AMPH) (Homo sapiens (Human)).